We begin with the raw amino-acid sequence, 205 residues long: Ribosomal RNA small subunit methyltransferase G (205 aa).

Residues Gly-76, Leu-81, 127-128 (IE), and Arg-140 each bind S-adenosyl-L-methionine.

It belongs to the methyltransferase superfamily. RNA methyltransferase RsmG family.

It is found in the cytoplasm. The enzyme catalyses guanosine(527) in 16S rRNA + S-adenosyl-L-methionine = N(7)-methylguanosine(527) in 16S rRNA + S-adenosyl-L-homocysteine. In terms of biological role, specifically methylates the N7 position of guanine in position 527 of 16S rRNA. The protein is Ribosomal RNA small subunit methyltransferase G of Francisella tularensis subsp. holarctica (strain FTNF002-00 / FTA).